The sequence spans 372 residues: ATP phosphoribosyltransferase regulatory subunit (372 aa).

The protein belongs to the class-II aminoacyl-tRNA synthetase family. HisZ subfamily. Heteromultimer composed of HisG and HisZ subunits.

The protein resides in the cytoplasm. It participates in amino-acid biosynthesis; L-histidine biosynthesis; L-histidine from 5-phospho-alpha-D-ribose 1-diphosphate: step 1/9. Its function is as follows. Required for the first step of histidine biosynthesis. May allow the feedback regulation of ATP phosphoribosyltransferase activity by histidine. The protein is ATP phosphoribosyltransferase regulatory subunit of Allorhizobium ampelinum (strain ATCC BAA-846 / DSM 112012 / S4) (Agrobacterium vitis (strain S4)).